The primary structure comprises 878 residues: Enoyl-CoA isomerase/hydratase claC (878 aa).

A disordered region spans residues 541-561 (VGPASTEATSPVVEPSTMESD). Residues 677 to 681 (AGADL) and Gly724 each bind substrate.

Belongs to the enoyl-CoA hydratase/isomerase family.

The protein operates within secondary metabolite biosynthesis. Its function is as follows. Enoyl-CoA isomerase/hydratase; part of the cla gene cluster that produces clavatol and ortho-quinone methide. The clavatol biosynthesis cluster cla and the terrestric acid cluster tra are both involved in the production of peniphenones and penilactones. The non-reducing PKS claF is responsible for the formation of clavatol from successive condensations of 3 malonyl-CoA units, presumably with a simple acetyl-CoA starter unit, and 2 methylation steps. The esterase claE probably collaborates with claF by catalyzing the hydrolysis of ACP-bound acyl intermediates to free the ACP from stalled intermediates. The clavatol oxidase claD then converts clavatol to hydroxyclavatol. Spontaneous dehydration of hydroxyclavatol leads to the accumulation of the highly active ortho-quinone methide. On the other hand, the PKS-NRPS hybrid traA is involved in the formation of crustosic acid, with the help of traB and traD. The polyketide synthase module (PKS) of traA is responsible for the synthesis of the polyketide backbone via the condensation of an acetyl-CoA starter unit with 3 malonyl-CoA units. The downstream nonribosomal peptide synthetase (NRPS) module then amidates the carboxyl end of the polyketide with L-malic acid. Because traA lacks a designated enoylreductase (ER) domain, the required activity is provided the enoyl reductase traG. Crustosic acid undergoes decarboxylation and isomerization to the terrestric acid, catalyzed by the 2-oxoglutarate-dependent dioxygenase traH. Both acids are further converted to the 2 gamma-butyrolactones (R)-5-methyltetronic acid and (S)-5-carboxylmethyltetronic acid, with involvement of the cytochrome P450 monooxygenase claJ. Spontaneous addition of the methide to these gamma-butyrolactones leads to peniphenone D and penilactone D, which undergo again stereospecific attacking by methide to give penilactones A and B. The function of the enoyl-CoA isomerase/hydratase claC has not been investigated yet. This is Enoyl-CoA isomerase/hydratase claC from Penicillium crustosum (Blue mold fungus).